The sequence spans 185 residues: Ribosome-recycling factor (185 aa).

Belongs to the RRF family.

Its subcellular location is the cytoplasm. Its function is as follows. Responsible for the release of ribosomes from messenger RNA at the termination of protein biosynthesis. May increase the efficiency of translation by recycling ribosomes from one round of translation to another. In Frankia alni (strain DSM 45986 / CECT 9034 / ACN14a), this protein is Ribosome-recycling factor.